We begin with the raw amino-acid sequence, 568 residues long: Periplasmic trehalase (568 aa).

Positions 1–39 are cleaved as a signal peptide; the sequence is MPYATARSGDVMSSAAPPCCTSLLGLSLSMFVAPGTLTA. Residues Arg-169, 176 to 177, Asn-213, 222 to 224, 294 to 296, and Gly-327 each bind substrate; these read WD, RSQ, and RPE. Residues Asp-329 and Glu-511 each act as proton donor/acceptor in the active site. Position 526 (Glu-526) interacts with substrate.

It belongs to the glycosyl hydrolase 37 family.

Its subcellular location is the periplasm. It catalyses the reaction alpha,alpha-trehalose + H2O = alpha-D-glucose + beta-D-glucose. Its function is as follows. Provides the cells with the ability to utilize trehalose at high osmolarity by splitting it into glucose molecules that can subsequently be taken up by the phosphotransferase-mediated uptake system. The chain is Periplasmic trehalase from Xanthomonas axonopodis pv. citri (strain 306).